A 139-amino-acid polypeptide reads, in one-letter code: Peptide methionine sulfoxide reductase B4 (139 aa).

Ala-2 is subject to N-acetylalanine. Residues 12–133 form the MsrB domain; sequence EEEWRAVLSP…NSVSINFNPA (122 aa). Cys-51, Cys-54, Cys-97, and Cys-100 together coordinate Zn(2+). Cys-69 and Cys-122 are disulfide-bonded. Cys-122 functions as the Nucleophile in the catalytic mechanism.

Belongs to the MsrB Met sulfoxide reductase family. Zn(2+) serves as cofactor.

Its subcellular location is the cytoplasm. The protein localises to the cytosol. The enzyme catalyses L-methionyl-[protein] + [thioredoxin]-disulfide + H2O = L-methionyl-(R)-S-oxide-[protein] + [thioredoxin]-dithiol. In terms of biological role, catalyzes the reduction of methionine sulfoxide (MetSO) to methionine in proteins. Plays a protective role against oxidative stress by restoring activity to proteins that have been inactivated by methionine oxidation. MSRB family specifically reduces the MetSO R-enantiomer. The protein is Peptide methionine sulfoxide reductase B4 (MSRB4) of Arabidopsis thaliana (Mouse-ear cress).